Consider the following 283-residue polypeptide: Pantothenate synthetase (283 aa).

ATP is bound at residue Met30 to His37. Catalysis depends on His37, which acts as the Proton donor. Gln61 serves as a coordination point for (R)-pantoate. Gln61 serves as a coordination point for beta-alanine. Residue Gly149 to Asp152 participates in ATP binding. (R)-pantoate is bound at residue Gln155. Residues Leu178 and Met186–Arg189 each bind ATP.

Belongs to the pantothenate synthetase family. In terms of assembly, homodimer.

Its subcellular location is the cytoplasm. The catalysed reaction is (R)-pantoate + beta-alanine + ATP = (R)-pantothenate + AMP + diphosphate + H(+). Its pathway is cofactor biosynthesis; (R)-pantothenate biosynthesis; (R)-pantothenate from (R)-pantoate and beta-alanine: step 1/1. Functionally, catalyzes the condensation of pantoate with beta-alanine in an ATP-dependent reaction via a pantoyl-adenylate intermediate. The chain is Pantothenate synthetase from Hahella chejuensis (strain KCTC 2396).